A 941-amino-acid chain; its full sequence is Pre-mRNA-processing factor 6 (941 aa).

Residues 1 to 79 (MNKKKKPFLG…DEDLNDTNYD (79 aa)) form a disordered region. The span at 39-65 (DANDPVDDRHAPPGKRTVGDQMKKNQA) shows a compositional bias: basic and acidic residues. The segment covering 66-78 (ADDDDEDLNDTNY) has biased composition (acidic residues). Serine 143 carries the post-translational modification Phosphoserine. Residues threonine 180, threonine 266, and threonine 275 each carry the phosphothreonine modification. Serine 279 is modified (phosphoserine). HAT repeat units lie at residues 384–416 (TDIRAKKRVLRKALEHVPNSVRLWKAAVELEEP), 418–444 (DARIMLSRAVECCPTSVELWLALARLE), 445–476 (TYENARKVLNKARENIPTDRHIWITAAKLEEA), 554–586 (NALECARAIYAYALQVFPSKKSVWLRAAYFEKN), 588–620 (GTRESLEALLQRAVAHCPKAEVLWLMGAKSKWL), 622–654 (GDVPAARSILALAFQANPNSEEIWLAAVKLESE), 689–721 (GNITAAQELCEEALRHYEDFPKLWMMKGQIEEQ), 723–755 (ELMERAREAYNQGLKKCPHSTPLWLLLSRLEEK), and 855–887 (RKITKAREWFHRTVKIDSDLGDAWAFFYKFELQ).

In terms of assembly, identified in the spliceosome B complex. Identified in the spliceosome C complex. Associates with the U5 snRNP particle. Component of the U4/U6-U5 tri-snRNP complex composed of the U4, U6 and U5 snRNAs and at least PRPF3, PRPF4, PRPF6, PRPF8, PRPF31, SNRNP200, TXNL4A, SNRNP40, DDX23, CD2BP2, PPIH, SNU13, EFTUD2, SART1 and USP39, LSm proteins LSm2-8 and Sm proteins. Interacts with ARAF1. Interacts with AR and NR3C1, but not ESR1, independently of the presence of hormones. Interacts with USH1G. Phosphorylated by PRP4K during spliceosome assembly.

It localises to the nucleus. Its subcellular location is the nucleoplasm. The protein localises to the nucleus speckle. In terms of biological role, involved in pre-mRNA splicing as component of the U4/U6-U5 tri-snRNP complex, one of the building blocks of the spliceosome. Enhances dihydrotestosterone-induced transactivation activity of AR, as well as dexamethasone-induced transactivation activity of NR3C1, but does not affect estrogen-induced transactivation. The chain is Pre-mRNA-processing factor 6 (Prpf6) from Rattus norvegicus (Rat).